An 853-amino-acid polypeptide reads, in one-letter code: DNA mismatch repair protein MutS (853 aa).

ATP is bound at residue 614 to 621; it reads GPNMGGKS.

This sequence belongs to the DNA mismatch repair MutS family.

Its function is as follows. This protein is involved in the repair of mismatches in DNA. It is possible that it carries out the mismatch recognition step. This protein has a weak ATPase activity. The chain is DNA mismatch repair protein MutS from Escherichia fergusonii (strain ATCC 35469 / DSM 13698 / CCUG 18766 / IAM 14443 / JCM 21226 / LMG 7866 / NBRC 102419 / NCTC 12128 / CDC 0568-73).